A 277-amino-acid chain; its full sequence is Inhibition of morphological differentiation protein (277 aa).

Positions 18, 20, and 192 each coordinate Mg(2+).

Belongs to the HAD-like hydrolase superfamily. SerB family.

The polypeptide is Inhibition of morphological differentiation protein (Streptomyces azureus).